A 158-amino-acid polypeptide reads, in one-letter code: MQGRLSAWLVKHGLVHRSLGFDYQGIETLQIKPEDWHSIAVILYVYGYNYLRSQCAYDVEPGGLLASVYHLTRIESGVDQPEEVCIKVFVPRRNPRIPSVFWVWKSVDFQERESYDMLGIFYENHPRLKRILMPESWIGWPLRKDYIAPNFYEIQDAY.

This sequence belongs to the complex I 30 kDa subunit family. In terms of assembly, NDH is composed of at least 16 different subunits, 5 of which are encoded in the nucleus.

The protein localises to the plastid. It is found in the chloroplast thylakoid membrane. It catalyses the reaction a plastoquinone + NADH + (n+1) H(+)(in) = a plastoquinol + NAD(+) + n H(+)(out). The enzyme catalyses a plastoquinone + NADPH + (n+1) H(+)(in) = a plastoquinol + NADP(+) + n H(+)(out). Its function is as follows. NDH shuttles electrons from NAD(P)H:plastoquinone, via FMN and iron-sulfur (Fe-S) centers, to quinones in the photosynthetic chain and possibly in a chloroplast respiratory chain. The immediate electron acceptor for the enzyme in this species is believed to be plastoquinone. Couples the redox reaction to proton translocation, and thus conserves the redox energy in a proton gradient. This is NAD(P)H-quinone oxidoreductase subunit J, chloroplastic from Fagopyrum esculentum subsp. ancestrale (Wild buckwheat).